We begin with the raw amino-acid sequence, 140 residues long: Large ribosomal subunit protein uL11 (140 aa).

This sequence belongs to the universal ribosomal protein uL11 family. As to quaternary structure, part of the ribosomal stalk of the 50S ribosomal subunit. Interacts with L10 and the large rRNA to form the base of the stalk. L10 forms an elongated spine to which L12 dimers bind in a sequential fashion forming a multimeric L10(L12)X complex. One or more lysine residues are methylated.

Forms part of the ribosomal stalk which helps the ribosome interact with GTP-bound translation factors. This chain is Large ribosomal subunit protein uL11, found in Pelobacter propionicus (strain DSM 2379 / NBRC 103807 / OttBd1).